Consider the following 256-residue polypeptide: Thiazole synthase (256 aa).

K96 (schiff-base intermediate with DXP) is an active-site residue. 1-deoxy-D-xylulose 5-phosphate-binding positions include G157, 184–185 (AG), and 206–207 (NT).

It belongs to the ThiG family. In terms of assembly, homotetramer. Forms heterodimers with either ThiH or ThiS.

The protein resides in the cytoplasm. It catalyses the reaction [ThiS sulfur-carrier protein]-C-terminal-Gly-aminoethanethioate + 2-iminoacetate + 1-deoxy-D-xylulose 5-phosphate = [ThiS sulfur-carrier protein]-C-terminal Gly-Gly + 2-[(2R,5Z)-2-carboxy-4-methylthiazol-5(2H)-ylidene]ethyl phosphate + 2 H2O + H(+). It participates in cofactor biosynthesis; thiamine diphosphate biosynthesis. Catalyzes the rearrangement of 1-deoxy-D-xylulose 5-phosphate (DXP) to produce the thiazole phosphate moiety of thiamine. Sulfur is provided by the thiocarboxylate moiety of the carrier protein ThiS. In vitro, sulfur can be provided by H(2)S. The sequence is that of Thiazole synthase from Brucella abortus (strain S19).